Reading from the N-terminus, the 276-residue chain is Golgi apparatus membrane protein TVP23 homolog C (276 aa).

At M1 the chain carries N-acetylmethionine. The segment at M1 to E21 is disordered. 2 consecutive transmembrane segments (helical) span residues L52–L72 and I126–L146. Positions G254–H276 are disordered.

The protein belongs to the TVP23 family.

Its subcellular location is the membrane. This is Golgi apparatus membrane protein TVP23 homolog C (TVP23C) from Homo sapiens (Human).